We begin with the raw amino-acid sequence, 119 residues long: Methylglyoxal synthase (119 aa).

The MGS-like domain occupies Met-1 to Phe-119. Residues His-8, Lys-12, Thr-34–Thr-37, and Ser-54–Gly-55 contribute to the substrate site. Asp-60 serves as the catalytic Proton donor/acceptor. His-87 is a substrate binding site.

It belongs to the methylglyoxal synthase family.

The enzyme catalyses dihydroxyacetone phosphate = methylglyoxal + phosphate. Catalyzes the formation of methylglyoxal from dihydroxyacetone phosphate. This chain is Methylglyoxal synthase, found in Clostridium botulinum (strain Eklund 17B / Type B).